The primary structure comprises 695 residues: Probable serine/threonine-protein kinase abkD (695 aa).

A compositionally biased stretch (polar residues) spans 105–119 (TTKPQPCQAKPPSSK). The segment at 105–149 (TTKPQPCQAKPPSSKQQQQQQQQQQQQQQQQQQQQSKKKTSKDRL) is disordered. The stretch at 118–150 (SKQQQQQQQQQQQQQQQQQQQQSKKKTSKDRLR) forms a coiled coil. A compositionally biased stretch (low complexity) spans 120–139 (QQQQQQQQQQQQQQQQQQQQ). The chain crosses the membrane as a helical span at residues 177 to 193 (TIASILAAIALIIYSYE). In terms of domain architecture, Protein kinase spans 317 to 695 (DFDRLPIAAA…LIKDQMKKLG (379 aa)). ATP contacts are provided by residues 323–331 (IAAASLAQV) and lysine 345. Aspartate 477 acts as the Proton acceptor in catalysis.

Belongs to the protein kinase superfamily. ADCK protein kinase family.

The protein resides in the membrane. The sequence is that of Probable serine/threonine-protein kinase abkD (abkD) from Dictyostelium discoideum (Social amoeba).